We begin with the raw amino-acid sequence, 484 residues long: uncharacterized protein (484 aa).

The HTH gntR-type domain maps to 14-82 (VPLHRQIEQY…KGGGTKVVNS (69 aa)). A DNA-binding region (H-T-H motif) is located at residues 42 to 61 (QRTLADMFQVNRSTVTAAID). Lys327 is modified (N6-(pyridoxal phosphate)lysine).

This sequence in the C-terminal section; belongs to the class-I pyridoxal-phosphate-dependent aminotransferase family. Pyridoxal 5'-phosphate is required as a cofactor.

This is an uncharacterized protein from Bacillus subtilis (strain 168).